The chain runs to 984 residues: MDCHLSILILFGCCVLSCSRELSPQPSNEVNLLDSKTIQGELGWISYPSHGWEEISGVDEHYTPIRTYQVCNVMDHSQNNWLRTNWVPRNSAQKIYVELKFTLRDCNSIPLVLGTCKETFNLYYMESDDDHGVKFLEHQFTKIDTIAADESFTQMDLGDRILKLNTEIREVGPVNKKGFYLAFQDVGACVALVSVRVYFKKCPFTVKNLAMFPDTVPMDSQSLVEVRGSCVNNSKEEDPPRMYCSTEGEWLVPIGKCTCNAGYEERGFICQACRPGFYKALDGVAKCTKCPPHSSTQEDGSMNCRCENNYFRAEKDPPSMACTRPPSAPRNVISNINETSVILDWSWPLDTGGRKDITFNIICKKCGWNVRQCEPCSPNVRFLPRQLGLTNTTVTVTDLLAHTNYTFEIDAINGVSELSSPPRQFAAVSITTNQAAPSPVMTIKKDRTSRNSISLSWQEPEHPNGIILDYEVKYYEKQEQETSYTILRARGTNVTISSLKPDTTYVFQIRARTAAGYGTNSRKFEFENSPDSFSISGENSHVVMIAISAAVAIIVLTVVTYVLVGRFCGYHKSKHSSDEKRLHFGNGHLRLPGLRTYVDPHTYEDPTQAVHEFAKELDATNIAIDKVVGAGEFGEVCSGRLKLPSKKEISVAIKTLKVGYTEKQRRDFLGEASIMGQFDHPNIIRLEGVVTKSKPVMIVTEYMENGSLDSFLRKHDAQFTVIQLVGMLRGIASGMKYLSDMGYVHRDLAARNILINSNLVCKVSDFGLSRVLEDDPEAAYTTRGGKIPVRWTSPEATAYRKFTSASDVWSYGIVLWEVMSYGERPYWEMSNQDVIKAVDEGYRLPLPMDCPAALYQLMLDCWQKDRNNRPKFEQIVSILDKLIRNPGSLKIITSAAARPSNLLLDQSNVDIATFHTTGDWLNGMRTAHCKEIFTGVEYSSCDTIAKISTDDMKKVGVTVVGPQKKIISSIKALETQSKNGPVPV.

An N-terminal signal peptide occupies residues 1–20 (MDCHLSILILFGCCVLSCSR). At 21-541 (ELSPQPSNEV…SFSISGENSH (521 aa)) the chain is on the extracellular side. The 179-residue stretch at 29 to 207 (EVNLLDSKTI…YFKKCPFTVK (179 aa)) folds into the Eph LBD domain. N-linked (GlcNAc...) asparagine glycosylation is found at Asn-232, Asn-337, Asn-391, Asn-404, and Asn-493. Fibronectin type-III domains are found at residues 325-435 (PPSA…TNQA) and 436-532 (APSP…SPDS). Residues 542-565 (VVMIAISAAVAIIVLTVVTYVLVG) form a helical membrane-spanning segment. At 566–984 (RFCGYHKSKH…TQSKNGPVPV (419 aa)) the chain is on the cytoplasmic side. Residues Tyr-597 and Tyr-603 each carry the phosphotyrosine; by autocatalysis modification. Residues 622 to 883 (IAIDKVVGAG…QIVSILDKLI (262 aa)) enclose the Protein kinase domain. ATP contacts are provided by residues 629–634 (GAGEFG), Lys-654, and 701–707 (EYMENGS). Tyr-702 bears the Phosphotyrosine; by autocatalysis mark. Asp-747 acts as the Proton acceptor in catalysis. Position 751–752 (751–752 (RN)) interacts with ATP. Tyr-780 carries the phosphotyrosine; by autocatalysis modification. Positions 912 to 976 (ATFHTTGDWL…ISSIKALETQ (65 aa)) constitute an SAM domain. A Phosphotyrosine modification is found at Tyr-938. Positions 982–984 (VPV) match the PDZ-binding motif.

It belongs to the protein kinase superfamily. Tyr protein kinase family. Ephrin receptor subfamily. As to quaternary structure, heterotetramer upon binding of the ligand. The heterotetramer is composed of an ephrin dimer and a receptor dimer. Oligomerization is probably required to induce biological responses. Forms a ternary EFNA5-EPHA3-ADAM10 complex mediating EFNA5 extracellular domain shedding by ADAM10 which regulates the EFNA5-EPHA3 complex internalization and function. Interacts (phosphorylated) with PTPN1; dephosphorylates EPHA3 and may regulate its trafficking and function. Interacts (phosphorylated) with CRK; mediates EFNA5-EPHA3 signaling through RHOA GTPase activation. Interacts with NCK1 (via SH2 domain); mediates EFNA5-EPHA3 signaling. In terms of processing, autophosphorylates upon activation by EFNA5. Phosphorylation on Tyr-603 mediates interaction with NCK1. Dephosphorylated by PTPN1. Most abundant in the heart, brain and lung.

It localises to the cell membrane. The catalysed reaction is L-tyrosyl-[protein] + ATP = O-phospho-L-tyrosyl-[protein] + ADP + H(+). Receptor tyrosine kinase which binds promiscuously membrane-bound ephrin family ligands residing on adjacent cells, leading to contact-dependent bidirectional signaling into neighboring cells. The signaling pathway downstream of the receptor is referred to as forward signaling while the signaling pathway downstream of the ephrin ligand is referred to as reverse signaling. Highly promiscuous for ephrin-A ligands it binds preferentially EFNA5. Upon activation by EFNA5 regulates cell-cell adhesion, cytoskeletal organization and cell migration. Plays a role in cardiac cells migration and differentiation and regulates the formation of the atrioventricular canal and septum during development probably through activation by EFNA1. Involved in the retinotectal mapping of neurons. May also control the segregation but not the guidance of motor and sensory axons during neuromuscular circuit development. In Rattus norvegicus (Rat), this protein is Ephrin type-A receptor 3 (Epha3).